The sequence spans 295 residues: UDP-N-acetylenolpyruvoylglucosamine reductase (295 aa).

The region spanning 27–194 (GVGGEAEVWF…TRVRLKLRRS (168 aa)) is the FAD-binding PCMH-type domain. The active site involves Arg174. Catalysis depends on Cys221, which acts as the Proton donor. Glu287 is an active-site residue.

Belongs to the MurB family. FAD serves as cofactor.

Its subcellular location is the cytoplasm. It catalyses the reaction UDP-N-acetyl-alpha-D-muramate + NADP(+) = UDP-N-acetyl-3-O-(1-carboxyvinyl)-alpha-D-glucosamine + NADPH + H(+). Its pathway is cell wall biogenesis; peptidoglycan biosynthesis. In terms of biological role, cell wall formation. The polypeptide is UDP-N-acetylenolpyruvoylglucosamine reductase (Deinococcus geothermalis (strain DSM 11300 / CIP 105573 / AG-3a)).